A 194-amino-acid polypeptide reads, in one-letter code: E3 ubiquitin-protein ligase RNF4 (194 aa).

A compositionally biased stretch (basic residues) spans 1–12 (MSTRNPQRKRRG). The interval 1–20 (MSTRNPQRKRRGGAVNSRQT) is required for ubiquitination activity. Residues 1 to 36 (MSTRNPQRKRRGGAVNSRQTQKRTRETTSTPEISLE) form a disordered region. The interval 6–65 (PQRKRRGGAVNSRQTQKRTRETTSTPEISLEAEPIELVETVGDEIVDLTCESLEPVVVDL) is mediates interaction with TRPS1. 4 short sequence motifs (SUMO interaction motif) span residues 40–43 (IELV), 50–53 (IVDL), 61–63 (VVV), and 71–74 (VVIV). Phosphoserine is present on residues Ser-98 and Ser-99. Residues Cys-136, Cys-139, Cys-158, His-160, Cys-163, Cys-166, Cys-177, and Cys-180 each contribute to the Zn(2+) site. Residues 136–181 (CPICMDGYSEIVQNGRLIVSTECGHVFCSQCLRDSLKNANTCPTCR) form an RING-type zinc finger.

Homodimer (via RING-type zinc finger domain). Interacts with GSC2. Interacts with AR/the androgen receptor and TBP. Interacts with TCF20. Interacts with PATZ1. Interacts with TRPS1; negatively regulates TRPS1 transcriptional repressor activity. Interacts with PML (isoform PML-1, isoform PML-2, isoform PML-3, isoform PML-4, isoform PML-5 and isoform PML-6). Interacts with PRDM1/Blimp-1. In terms of processing, sumoylated; conjugated by one or two SUMO1 moieties. Post-translationally, autoubiquitinated. Widely expressed with highest levels in testis.

The protein resides in the cytoplasm. The protein localises to the nucleus. It localises to the nucleoplasm. It is found in the PML body. It catalyses the reaction S-ubiquitinyl-[E2 ubiquitin-conjugating enzyme]-L-cysteine + [acceptor protein]-L-lysine = [E2 ubiquitin-conjugating enzyme]-L-cysteine + N(6)-ubiquitinyl-[acceptor protein]-L-lysine.. It participates in protein modification; protein ubiquitination. E3 ubiquitin-protein ligase which binds polysumoylated chains covalently attached to proteins and mediates 'Lys-6'-, 'Lys-11'-, 'Lys-48'- and 'Lys-63'-linked polyubiquitination of those substrates and their subsequent targeting to the proteasome for degradation. Regulates the degradation of several proteins including PML and the transcriptional activator PEA3. Involved in chromosome alignment and spindle assembly, it regulates the kinetochore CENPH-CENPI-CENPK complex by targeting polysumoylated CENPI to proteasomal degradation. Regulates the cellular responses to hypoxia and heat shock through degradation of respectively EPAS1 and PARP1. Alternatively, it may also bind DNA/nucleosomes and have a more direct role in the regulation of transcription for instance enhancing basal transcription and steroid receptor-mediated transcriptional activation. Catalyzes ubiquitination of sumoylated PARP1 in response to PARP1 trapping to chromatin, leading to PARP1 removal from chromatin by VCP/p97. The polypeptide is E3 ubiquitin-protein ligase RNF4 (Rattus norvegicus (Rat)).